The sequence spans 139 residues: Putative lipoprotein MIP_01412 (139 aa).

Positions 1 to 19 (MRNRTVAAGAVLTAALLGA) are cleaved as a signal peptide. Residue Cys-20 is the site of N-palmitoyl cysteine attachment. The S-diacylglycerol cysteine moiety is linked to residue Cys-20.

Belongs to the mycobacterial 19 kDa antigen family.

The protein localises to the cell membrane. In Mycobacterium indicus pranii (strain DSM 45239 / MTCC 9506), this protein is Putative lipoprotein MIP_01412.